Consider the following 180-residue polypeptide: MTQRLKKLYTEKIVPKFYKDFQYKNIHEVPSLKKIVINRGIGDASQNAKILETFLKELSIIAGQKGVITRSKKSIAGFKIRDKMPVGVSVTLRGDRMYGFLDRLIHLALPRVRDFQGINPKSFDKNGNYSLGLEEQLMFPEIEYDKIDQIRGMDISIVTTAKNQEEGLALLKEFGLPFQS.

This sequence belongs to the universal ribosomal protein uL5 family. In terms of assembly, part of the 50S ribosomal subunit; contacts the 5S rRNA.

The protein resides in the plastid. The protein localises to the chloroplast. Binds 5S rRNA, forms part of the central protuberance of the 50S subunit. This Tetradesmus obliquus (Green alga) protein is Large ribosomal subunit protein uL5c (rpl5).